Consider the following 328-residue polypeptide: Tetraacyldisaccharide 4'-kinase (328 aa).

55 to 62 (TAGGNGKT) contacts ATP.

It belongs to the LpxK family.

It carries out the reaction lipid A disaccharide (E. coli) + ATP = lipid IVA (E. coli) + ADP + H(+). The protein operates within glycolipid biosynthesis; lipid IV(A) biosynthesis; lipid IV(A) from (3R)-3-hydroxytetradecanoyl-[acyl-carrier-protein] and UDP-N-acetyl-alpha-D-glucosamine: step 6/6. Its function is as follows. Transfers the gamma-phosphate of ATP to the 4'-position of a tetraacyldisaccharide 1-phosphate intermediate (termed DS-1-P) to form tetraacyldisaccharide 1,4'-bis-phosphate (lipid IVA). The polypeptide is Tetraacyldisaccharide 4'-kinase (lpxK) (Escherichia coli (strain K12)).